The primary structure comprises 611 residues: Actin-related protein 5 (611 aa).

Coiled-coil stretches lie at residues 290-329 (TLTS…LDRL) and 355-386 (SAEE…NIEV).

This sequence belongs to the actin family. ARP5 subfamily. In terms of assembly, component of the chromatin remodeling INO80 complex.

The protein resides in the nucleus. Its function is as follows. Proposed core component of the chromatin remodeling INO80 complex which is involved in transcriptional regulation, DNA replication and probably DNA repair. This Gallus gallus (Chicken) protein is Actin-related protein 5 (ACTR5).